Consider the following 841-residue polypeptide: pre-rRNA 2'-O-ribose RNA methyltransferase FTSJ3 (841 aa).

Positions 56, 58, 76, 92, and 117 each coordinate S-adenosyl-L-methionine. The Proton acceptor role is filled by Lys-157. Residues Ile-332–Asn-366 are disordered. Phosphoserine is present on residues Ser-333, Ser-335, Ser-336, Ser-347, and Ser-356. Residues Gly-337–Ser-347 show a composition bias toward acidic residues. The stretch at Ser-356–Leu-404 forms a coiled coil. Residue Lys-357 forms a Glycyl lysine isopeptide (Lys-Gly) (interchain with G-Cter in SUMO2) linkage. Arg-389 bears the Citrulline mark. A disordered region spans residues Val-454–Gln-482. Positions Asp-456–Glu-474 are enriched in acidic residues. Ser-547 bears the Phosphoserine mark. Thr-567 is modified (phosphothreonine). A Glycyl lysine isopeptide (Lys-Gly) (interchain with G-Cter in SUMO2) cross-link involves residue Lys-573. A Phosphoserine modification is found at Ser-578. Residues Pro-579 to His-654 form a disordered region. Lys-637 is covalently cross-linked (Glycyl lysine isopeptide (Lys-Gly) (interchain with G-Cter in SUMO2)). Ser-638 carries the post-translational modification Phosphoserine. A Glycyl lysine isopeptide (Lys-Gly) (interchain with G-Cter in SUMO2) cross-link involves residue Lys-653. Ser-670 bears the Phosphoserine mark. A Glycyl lysine isopeptide (Lys-Gly) (interchain with G-Cter in SUMO2) cross-link involves residue Lys-672. Position 682 is a phosphoserine (Ser-682). Lys-704 participates in a covalent cross-link: Glycyl lysine isopeptide (Lys-Gly) (interchain with G-Cter in SUMO2). A coiled-coil region spans residues Ile-733–Glu-771. A Citrulline modification is found at Arg-777. Residues Val-805 to Phe-815 show a composition bias toward basic residues. Positions Val-805–Lys-841 are disordered. Positions Lys-816 to Lys-832 are enriched in basic and acidic residues.

The protein belongs to the class I-like SAM-binding methyltransferase superfamily. RNA methyltransferase RlmE family. SPB1 subfamily. In terms of assembly, interacts with NIP7. Post-translationally, citrullinated by PADI4.

Its subcellular location is the nucleus. The protein localises to the nucleolus. It carries out the reaction a ribonucleotide in rRNA + S-adenosyl-L-methionine = a 2'-O-methylribonucleotide in rRNA + S-adenosyl-L-homocysteine + H(+). RNA 2'-O-methyltransferase involved in the processing of the 34S pre-rRNA to 18S rRNA and in 40S ribosomal subunit formation. The chain is pre-rRNA 2'-O-ribose RNA methyltransferase FTSJ3 from Pongo abelii (Sumatran orangutan).